The following is a 305-amino-acid chain: Coenzyme PQQ synthesis protein B (305 aa).

It belongs to the PqqB family.

The protein operates within cofactor biosynthesis; pyrroloquinoline quinone biosynthesis. Its function is as follows. May be involved in the transport of PQQ or its precursor to the periplasm. The polypeptide is Coenzyme PQQ synthesis protein B (Methylobacillus flagellatus (strain ATCC 51484 / DSM 6875 / VKM B-1610 / KT)).